Reading from the N-terminus, the 174-residue chain is MPDSADAPEEVPEFVDIVLEDDRWEDADLPAMAERAARAVGEWLGLDAFQVVVMGCDDARIAALNAEFRGKPKPTNVLSWPAVEFEAREPGAHPEPPGAEELGDIAISYDTCLREAEAQGKPFADHATHLLVHAMLHLAGYDHIDDEDAETMEDAERSILGKLGIPDPYLEHET.

3 residues coordinate Zn(2+): His133, His137, and His143.

The protein belongs to the endoribonuclease YbeY family. It depends on Zn(2+) as a cofactor.

It is found in the cytoplasm. Its function is as follows. Single strand-specific metallo-endoribonuclease involved in late-stage 70S ribosome quality control and in maturation of the 3' terminus of the 16S rRNA. This Paracoccus denitrificans (strain Pd 1222) protein is Endoribonuclease YbeY.